Reading from the N-terminus, the 155-residue chain is Aspartate carbamoyltransferase regulatory chain (155 aa).

C111, C116, C137, and C140 together coordinate Zn(2+).

This sequence belongs to the PyrI family. Contains catalytic and regulatory chains. Zn(2+) serves as cofactor.

Involved in allosteric regulation of aspartate carbamoyltransferase. The sequence is that of Aspartate carbamoyltransferase regulatory chain from Haloarcula marismortui (strain ATCC 43049 / DSM 3752 / JCM 8966 / VKM B-1809) (Halobacterium marismortui).